A 458-amino-acid chain; its full sequence is tRNA(Ile)-lysidine synthase (458 aa).

35-40 (SGGVDS) contributes to the ATP binding site.

This sequence belongs to the tRNA(Ile)-lysidine synthase family.

Its subcellular location is the cytoplasm. The catalysed reaction is cytidine(34) in tRNA(Ile2) + L-lysine + ATP = lysidine(34) in tRNA(Ile2) + AMP + diphosphate + H(+). Functionally, ligates lysine onto the cytidine present at position 34 of the AUA codon-specific tRNA(Ile) that contains the anticodon CAU, in an ATP-dependent manner. Cytidine is converted to lysidine, thus changing the amino acid specificity of the tRNA from methionine to isoleucine. The protein is tRNA(Ile)-lysidine synthase of Nitrosomonas europaea (strain ATCC 19718 / CIP 103999 / KCTC 2705 / NBRC 14298).